The following is a 72-amino-acid chain: uncharacterized protein (72 aa).

This is an uncharacterized protein from Saccharomyces cerevisiae (strain ATCC 204508 / S288c) (Baker's yeast).